The chain runs to 127 residues: Fluoride-specific ion channel FluC 1 (127 aa).

The next 4 helical transmembrane spans lie at L3–W23, I35–Y55, I74–I94, and L102–Y122. Residues G78 and T81 each contribute to the Na(+) site.

The protein belongs to the fluoride channel Fluc/FEX (TC 1.A.43) family.

The protein resides in the cell membrane. The enzyme catalyses fluoride(in) = fluoride(out). With respect to regulation, na(+) is not transported, but it plays an essential structural role and its presence is essential for fluoride channel function. In terms of biological role, fluoride-specific ion channel. Important for reducing fluoride concentration in the cell, thus reducing its toxicity. This Halalkalibacterium halodurans (strain ATCC BAA-125 / DSM 18197 / FERM 7344 / JCM 9153 / C-125) (Bacillus halodurans) protein is Fluoride-specific ion channel FluC 1.